Reading from the N-terminus, the 301-residue chain is Possible hemolysin C (301 aa).

CBS domains are found at residues 80 to 142 and 145 to 202; these read MVPR…NGRL and LIRK…IDDE.

It belongs to the UPF0053 family. Hemolysin C subfamily.

This Rickettsia akari (strain Hartford) protein is Possible hemolysin C (tlyC).